A 312-amino-acid chain; its full sequence is Protoheme IX farnesyltransferase (312 aa).

The next 8 membrane-spanning stretches (helical) occupy residues 33–53 (VMLLVVFTALVGLIVSPVSIN), 54–74 (PLYGFLAILCIAVGGGGAGAL), 105–125 (FIFGMVLSILSVLIMGSFVNW), 126–146 (FAALFLAFTIFFYIVVYTIWL), 154–174 (IVIGGAAGAFPPMIGWAAATG), 181–201 (FLLFLIIFMWTPPHFWSLSLF), 243–263 (IIGFAGVFYGIFSTVLSIIFI), and 291–311 (FYLAAIFGILLIEFFVWCFII).

This sequence belongs to the UbiA prenyltransferase family. Protoheme IX farnesyltransferase subfamily.

The protein localises to the cell inner membrane. The enzyme catalyses heme b + (2E,6E)-farnesyl diphosphate + H2O = Fe(II)-heme o + diphosphate. It functions in the pathway porphyrin-containing compound metabolism; heme O biosynthesis; heme O from protoheme: step 1/1. Functionally, converts heme B (protoheme IX) to heme O by substitution of the vinyl group on carbon 2 of heme B porphyrin ring with a hydroxyethyl farnesyl side group. This is Protoheme IX farnesyltransferase from Bartonella henselae (strain ATCC 49882 / DSM 28221 / CCUG 30454 / Houston 1) (Rochalimaea henselae).